Consider the following 37-residue polypeptide: Large ribosomal subunit protein bL36 (37 aa).

It belongs to the bacterial ribosomal protein bL36 family.

The chain is Large ribosomal subunit protein bL36 from Micrococcus luteus (strain ATCC 4698 / DSM 20030 / JCM 1464 / CCM 169 / CCUG 5858 / IAM 1056 / NBRC 3333 / NCIMB 9278 / NCTC 2665 / VKM Ac-2230) (Micrococcus lysodeikticus).